Reading from the N-terminus, the 130-residue chain is MTDPISDFLTRLRNASKARQAETTSPHSKLREAIAAILKAEGYIADYKDGTDAAGHKTLVVALKYVDSAPAITGLTRVSTPGRRLYYSYQEIPRVLNGLGISIVSTSRGLMKDADCRRNKAGGELICNVW.

It belongs to the universal ribosomal protein uS8 family. In terms of assembly, part of the 30S ribosomal subunit. Contacts proteins S5 and S12.

Functionally, one of the primary rRNA binding proteins, it binds directly to 16S rRNA central domain where it helps coordinate assembly of the platform of the 30S subunit. This chain is Small ribosomal subunit protein uS8, found in Opitutus terrae (strain DSM 11246 / JCM 15787 / PB90-1).